Reading from the N-terminus, the 155-residue chain is Lipoprotein signal peptidase (155 aa).

Transmembrane regions (helical) follow at residues 52-72 (ILQG…AGIV) and 85-105 (LGVA…DRVF). Active-site residues include D111 and D129. A helical membrane pass occupies residues 124–144 (IFNIADSSLCVGVILLFIQML).

Belongs to the peptidase A8 family.

Its subcellular location is the cell membrane. The catalysed reaction is Release of signal peptides from bacterial membrane prolipoproteins. Hydrolyzes -Xaa-Yaa-Zaa-|-(S,diacylglyceryl)Cys-, in which Xaa is hydrophobic (preferably Leu), and Yaa (Ala or Ser) and Zaa (Gly or Ala) have small, neutral side chains.. Its pathway is protein modification; lipoprotein biosynthesis (signal peptide cleavage). In terms of biological role, this protein specifically catalyzes the removal of signal peptides from prolipoproteins. The chain is Lipoprotein signal peptidase from Bacillus pumilus (strain SAFR-032).